Consider the following 459-residue polypeptide: Biphenyl dioxygenase subunit alpha (459 aa).

Residues W58–A156 enclose the Rieske domain. [2Fe-2S] cluster is bound by residues C100, H102, C120, and H123. Fe cation-binding residues include H233 and H239.

Belongs to the bacterial ring-hydroxylating dioxygenase alpha subunit family. In terms of assembly, heterohexamer consisting of three BphA subunits and three BphE subunits. A ferredoxin (BphF) and a ferredoxin reductase (BphG) must be present to obtain activity. It depends on [2Fe-2S] cluster as a cofactor. Fe cation is required as a cofactor.

It carries out the reaction biphenyl + NADH + O2 + H(+) = (2R,3S)-3-phenylcyclohexa-3,5-diene-1,2-diol + NAD(+). The protein operates within xenobiotic degradation; biphenyl degradation; 2-hydroxy-2,4-pentadienoate and benzoate from biphenyl: step 1/4. The chain is Biphenyl dioxygenase subunit alpha (bphA) from Paraburkholderia xenovorans (strain LB400).